The chain runs to 45 residues: Photosystem II reaction center protein K (45 aa).

The propeptide occupies 1-8 (MEAVLLLA). Residues 24–44 (MPVIPLFFLALAFVWQAAVGF) form a helical membrane-spanning segment.

It belongs to the PsbK family. In terms of assembly, PSII is composed of 1 copy each of membrane proteins PsbA, PsbB, PsbC, PsbD, PsbE, PsbF, PsbH, PsbI, PsbJ, PsbK, PsbL, PsbM, PsbT, PsbX, PsbY, PsbZ, Psb30/Ycf12, peripheral proteins PsbO, CyanoQ (PsbQ), PsbU, PsbV and a large number of cofactors. It forms dimeric complexes.

Its subcellular location is the cellular thylakoid membrane. One of the components of the core complex of photosystem II (PSII). PSII is a light-driven water:plastoquinone oxidoreductase that uses light energy to abstract electrons from H(2)O, generating O(2) and a proton gradient subsequently used for ATP formation. It consists of a core antenna complex that captures photons, and an electron transfer chain that converts photonic excitation into a charge separation. This is Photosystem II reaction center protein K from Acaryochloris marina (strain MBIC 11017).